The sequence spans 477 residues: Salivary plasminogen activator alpha 1 (477 aa).

A signal peptide spans 1-36 (MVNTMKTKLLCVLLLCGAVFSLPRQETYRQLARGSR). A Fibronectin type-I domain is found at 40 to 82 (VACKDEITQMTYRRQESWLRPEVRSKRVEHCQCDRGQARCHTV). 14 cysteine pairs are disulfide-bonded: cysteine 42–cysteine 72, cysteine 70–cysteine 79, cysteine 87–cysteine 98, cysteine 92–cysteine 109, cysteine 111–cysteine 120, cysteine 128–cysteine 209, cysteine 149–cysteine 191, cysteine 180–cysteine 204, cysteine 214–cysteine 345, cysteine 257–cysteine 273, cysteine 265–cysteine 334, cysteine 359–cysteine 434, cysteine 391–cysteine 407, and cysteine 424–cysteine 452. Residues 83–121 (PVNSCSEPRCFNGGTCWQAVYFSDFVCQCPAGYTGKRCE) form the EGF-like domain. Residues 128–209 (CYEGQGVTYR…TSESCSVPVC (82 aa)) form the Kringle domain. Residue asparagine 153 is glycosylated (N-linked (GlcNAc...) asparagine). The Peptidase S1 domain occupies 226-476 (STGGLFTDIT…YLGWIRDNMH (251 aa)). Residues histidine 272 and aspartate 321 each act as charge relay system in the active site. An N-linked (GlcNAc...) asparagine glycan is attached at asparagine 398. Serine 428 acts as the Charge relay system in catalysis.

The protein belongs to the peptidase S1 family. Monomer.

The protein resides in the secreted. It catalyses the reaction Specific cleavage of Arg-|-Val bond in plasminogen to form plasmin.. Activity toward plasminogen is stimulated in the presence of fibrin I. Its function is as follows. Probably essential to support the feeding habits of this exclusively haematophagous animal. Potent thrombolytic agent. The chain is Salivary plasminogen activator alpha 1 from Desmodus rotundus (Vampire bat).